Reading from the N-terminus, the 466-residue chain is Argininosuccinate lyase (466 aa).

The protein belongs to the lyase 1 family. Argininosuccinate lyase subfamily.

The protein resides in the cytoplasm. It carries out the reaction 2-(N(omega)-L-arginino)succinate = fumarate + L-arginine. It participates in amino-acid biosynthesis; L-arginine biosynthesis; L-arginine from L-ornithine and carbamoyl phosphate: step 3/3. The polypeptide is Argininosuccinate lyase (Brucella anthropi (strain ATCC 49188 / DSM 6882 / CCUG 24695 / JCM 21032 / LMG 3331 / NBRC 15819 / NCTC 12168 / Alc 37) (Ochrobactrum anthropi)).